A 447-amino-acid chain; its full sequence is Serine/threonine-protein phosphatase 2A 55 kDa regulatory subunit B delta isoform (447 aa).

WD repeat units follow at residues 26–65 (AEADIISTVEFNCSGDLLATGDKGGRVVIFQREQENKSRP), 91–132 (EIEE…KRVE), 175–213 (AHTYHINSISVNSDHETYLSADDLRINLWHLEITDRSFN), 224–264 (ELTE…LCDR), 283–321 (EIISSISDVKFSNSGRYMMTRDYLSVKVWDLNMESRPVE), 338–379 (ENDC…DITL), and 414–447 (DFNKKILHTAWHPTDNIIAVAATNNLYIFQDKVN).

It belongs to the phosphatase 2A regulatory subunit B family. In terms of assembly, PP2A consists of a common heterodimeric core enzyme, composed of a 36 kDa catalytic subunit (subunit C) and a 65 kDa constant regulatory subunit (PR65 or subunit A), that associates with a variety of regulatory subunits. Proteins that associate with the core dimer include three families of regulatory subunits B (the R2/B/PR55/B55, R3/B''/PR72/PR130/PR59 and R5/B'/B56 families), the 48 kDa variable regulatory subunit, viral proteins, and cell signaling molecules. Interacts with ensa (when phosphorylated at 'Ser-67') and arpp19 (when phosphorylated at 'Ser-67'), leading to inhibit PP2A activity.

Its subcellular location is the cytoplasm. In terms of biological role, substrate-recognition subunit of protein phosphatase 2A (PP2A) that plays a key role in cell cycle by controlling mitosis entry and exit. The activity of PP2A complexes containing ppp2r2d (PR55-delta) fluctuate during the cell cycle: the activity is high in interphase and low in mitosis. During mitosis, activity of PP2A is inhibited via interaction with phosphorylated ensa and arpp19 inhibitors. PP2A complexes containing ppp2r2d (PR55-delta) also regulate the activity of TGF-beta/Activin/Nodal signaling by restricting receptor activity. Within the PP2A complexes, the B regulatory subunits modulate substrate selectivity and catalytic activity, and may also direct the localization of the catalytic enzyme to a particular subcellular compartment. The protein is Serine/threonine-protein phosphatase 2A 55 kDa regulatory subunit B delta isoform (ppp2r2d) of Xenopus tropicalis (Western clawed frog).